A 106-amino-acid chain; its full sequence is Urease subunit beta (106 aa).

The protein belongs to the urease beta subunit family. In terms of assembly, heterotrimer of UreA (gamma), UreB (beta) and UreC (alpha) subunits. Three heterotrimers associate to form the active enzyme.

It localises to the cytoplasm. It carries out the reaction urea + 2 H2O + H(+) = hydrogencarbonate + 2 NH4(+). Its pathway is nitrogen metabolism; urea degradation; CO(2) and NH(3) from urea (urease route): step 1/1. This Escherichia coli O157:H7 protein is Urease subunit beta.